The following is a 124-amino-acid chain: UPF0299 membrane protein VP1300 (124 aa).

The next 4 helical transmembrane spans lie at 9 to 29, 35 to 55, 72 to 92, and 95 to 115; these read LIQLLISLFLIMGALGIGITI, VSVPGSVIGMLVLFFSMTLGL, MILLFVPISVGLMQHFDMLLA, and LPIIASAVGGSLIVLVSLAWL.

Belongs to the UPF0299 family.

Its subcellular location is the cell inner membrane. This is UPF0299 membrane protein VP1300 from Vibrio parahaemolyticus serotype O3:K6 (strain RIMD 2210633).